Reading from the N-terminus, the 367-residue chain is Tubulin-like protein CetZ (367 aa).

Residues 11 to 15 (QCGNR), Ser111, 115 to 117 (GTG), Glu148, Asn176, and Asn194 contribute to the GTP site.

Belongs to the CetZ family.

The protein resides in the cytoplasm. Functionally, involved in cell shape control. The polypeptide is Tubulin-like protein CetZ (Methanothrix thermoacetophila (strain DSM 6194 / JCM 14653 / NBRC 101360 / PT) (Methanosaeta thermophila)).